We begin with the raw amino-acid sequence, 194 residues long: Prefoldin subunit 3 (194 aa).

The protein belongs to the prefoldin subunit alpha family. In terms of assembly, heterohexamer of two PFD-alpha type and four PFD-beta type subunits. Interacts with itself. Interacts with Vhl and betaTub56D/tubulin beta-1 chain. Interacts with tubulin alpha-beta heterodimers by itself or in complex with Vhl. Does not interact with microtubules (MTs). As to expression, expressed in larval central nervous system (CNS) and pupal testis (at protein level).

Its subcellular location is the cytoplasm. In terms of biological role, binds specifically to cytosolic chaperonin (c-CPN) and transfers target proteins to it. Binds to nascent polypeptide chain and promotes folding in an environment in which there are many competing pathways for nonnative proteins. Required for tubulin stability and spindle and centrosome formation in cooperation with Vhl. The protein is Prefoldin subunit 3 (mgr) of Drosophila melanogaster (Fruit fly).